A 384-amino-acid polypeptide reads, in one-letter code: Ribosomal RNA large subunit methyltransferase G (384 aa).

Belongs to the methyltransferase superfamily. RlmG family.

The protein resides in the cytoplasm. The enzyme catalyses guanosine(1835) in 23S rRNA + S-adenosyl-L-methionine = N(2)-methylguanosine(1835) in 23S rRNA + S-adenosyl-L-homocysteine + H(+). Its function is as follows. Specifically methylates the guanine in position 1835 (m2G1835) of 23S rRNA. In Pseudoalteromonas atlantica (strain T6c / ATCC BAA-1087), this protein is Ribosomal RNA large subunit methyltransferase G.